The sequence spans 422 residues: Regulator of sigma-W protease RasP (422 aa).

4 helical membrane-spanning segments follow: residues 6–26 (VIAF…GHLL), 175–195 (IAAG…MLGL), 346–366 (IVNL…VNLL), and 394–414 (EAFV…VVTW). His20 serves as a coordination point for Zn(2+). Residue Glu21 is part of the active site. His24 serves as a coordination point for Zn(2+). The region spanning 186–271 (AYVILVMLGL…TLHISVTPEA (86 aa)) is the PDZ domain.

This sequence belongs to the peptidase M50B family. Zn(2+) serves as cofactor.

The protein resides in the cell membrane. Functionally, is responsible for site-2 cleavage of the RsiW anti-sigma factor. This results, after a third proteolytic step catalyzed by the ClpXP protease, in the release of SigW and the transcription activation of the genes under the control of the sigma-W factor. Can also cleave liberated signal peptides of PenP and Mpr, probably within in the cell membrane. The sequence is that of Regulator of sigma-W protease RasP from Bacillus subtilis (strain 168).